A 267-amino-acid chain; its full sequence is Thymidylate synthase (267 aa).

Arg-24 lines the dUMP pocket. His-54 is a binding site for (6R)-5,10-methylene-5,6,7,8-tetrahydrofolate. DUMP is bound at residue 129-130 (RR). Cys-149 functions as the Nucleophile in the catalytic mechanism. DUMP contacts are provided by residues 169–172 (RSAD), Asn-180, and 210–212 (HVY). Residue Asp-172 coordinates (6R)-5,10-methylene-5,6,7,8-tetrahydrofolate. Residue Ala-266 participates in (6R)-5,10-methylene-5,6,7,8-tetrahydrofolate binding.

The protein belongs to the thymidylate synthase family. Bacterial-type ThyA subfamily. As to quaternary structure, homodimer.

Its subcellular location is the cytoplasm. The catalysed reaction is dUMP + (6R)-5,10-methylene-5,6,7,8-tetrahydrofolate = 7,8-dihydrofolate + dTMP. It participates in pyrimidine metabolism; dTTP biosynthesis. Functionally, catalyzes the reductive methylation of 2'-deoxyuridine-5'-monophosphate (dUMP) to 2'-deoxythymidine-5'-monophosphate (dTMP) while utilizing 5,10-methylenetetrahydrofolate (mTHF) as the methyl donor and reductant in the reaction, yielding dihydrofolate (DHF) as a by-product. This enzymatic reaction provides an intracellular de novo source of dTMP, an essential precursor for DNA biosynthesis. This chain is Thymidylate synthase, found in Paenarthrobacter aurescens (strain TC1).